A 327-amino-acid chain; its full sequence is Ferrochelatase (327 aa).

Fe cation is bound by residues histidine 187 and glutamate 265.

The protein belongs to the ferrochelatase family.

It localises to the cytoplasm. It catalyses the reaction heme b + 2 H(+) = protoporphyrin IX + Fe(2+). It functions in the pathway porphyrin-containing compound metabolism; protoheme biosynthesis; protoheme from protoporphyrin-IX: step 1/1. Functionally, catalyzes the ferrous insertion into protoporphyrin IX. This is Ferrochelatase from Chlamydia pneumoniae (Chlamydophila pneumoniae).